A 124-amino-acid polypeptide reads, in one-letter code: Small ribosomal subunit protein uS12 (124 aa).

D89 is subject to 3-methylthioaspartic acid.

This sequence belongs to the universal ribosomal protein uS12 family. In terms of assembly, part of the 30S ribosomal subunit. Contacts proteins S8 and S17. May interact with IF1 in the 30S initiation complex.

With S4 and S5 plays an important role in translational accuracy. In terms of biological role, interacts with and stabilizes bases of the 16S rRNA that are involved in tRNA selection in the A site and with the mRNA backbone. Located at the interface of the 30S and 50S subunits, it traverses the body of the 30S subunit contacting proteins on the other side and probably holding the rRNA structure together. The combined cluster of proteins S8, S12 and S17 appears to hold together the shoulder and platform of the 30S subunit. The protein is Small ribosomal subunit protein uS12 of Shewanella amazonensis (strain ATCC BAA-1098 / SB2B).